A 598-amino-acid chain; its full sequence is Probable translation initiation factor IF-2 (598 aa).

The tr-type G domain occupies 3-225 (LRCPIVSVLG…GLAQKFLEQK (223 aa)). A G1 region spans residues 12 to 19 (GHVDHGKT). 12–19 (GHVDHGKT) serves as a coordination point for GTP. The G2 stretch occupies residues 37–41 (GITQH). The G3 stretch occupies residues 76 to 79 (DTPG). GTP contacts are provided by residues 76-80 (DTPGH) and 130-133 (NKVD). The G4 stretch occupies residues 130–133 (NKVD). Residues 200–202 (SAM) form a G5 region.

It belongs to the TRAFAC class translation factor GTPase superfamily. Classic translation factor GTPase family. IF-2 subfamily.

Function in general translation initiation by promoting the binding of the formylmethionine-tRNA to ribosomes. Seems to function along with eIF-2. This is Probable translation initiation factor IF-2 from Methanococcus maripaludis (strain C7 / ATCC BAA-1331).